We begin with the raw amino-acid sequence, 205 residues long: Small ribosomal subunit protein uS4 (205 aa).

The segment at 18 to 49 (NIWGRPKSPVNKREYGPGQHGQRRKGKLSDFG) is disordered. Residues 94–157 (RRLDTVVYRA…KQLALVLEAN (64 aa)) enclose the S4 RNA-binding domain.

The protein belongs to the universal ribosomal protein uS4 family. As to quaternary structure, part of the 30S ribosomal subunit. Contacts protein S5. The interaction surface between S4 and S5 is involved in control of translational fidelity.

Functionally, one of the primary rRNA binding proteins, it binds directly to 16S rRNA where it nucleates assembly of the body of the 30S subunit. With S5 and S12 plays an important role in translational accuracy. This Nitrobacter winogradskyi (strain ATCC 25391 / DSM 10237 / CIP 104748 / NCIMB 11846 / Nb-255) protein is Small ribosomal subunit protein uS4.